We begin with the raw amino-acid sequence, 334 residues long: Chorismatase (334 aa).

Residues Y143, R150, Y203, and R216 each contribute to the substrate site. E328 (proton acceptor) is an active-site residue.

Belongs to the FkbO/Hyg5 family. In terms of assembly, monomer.

It catalyses the reaction chorismate + H2O = (3R,4R)-3,4-dihydroxy-3,4-dihydrobenzoate + pyruvate. Its function is as follows. Involved in the biosynthesis of the macrocyclic amino acid-linked polyketides rapamycin which is a potent immunosuppressant that prevents T-cell proliferation through initial binding to the immunophilin FKBP12. Catalyzes the hydrolysis of chorismate via a 1,4-conjugate elimination of water to yield (4R,5R)-4,5-dihydroxycyclohexa-1,5-dienecarboxylic acid (DCDC). This Streptomyces rapamycinicus (strain ATCC 29253 / DSM 41530 / NRRL 5491 / AYB-994) (Streptomyces hygroscopicus (strain ATCC 29253)) protein is Chorismatase (rapK).